Consider the following 175-residue polypeptide: Transcription factor HES-3 (175 aa).

The bHLH domain occupies 1–49 (MEKKRRARINVSLEQLRSLLERHYSHQIRKRKLEKADILELSVKYMRSL). Residues 65-98 (YPSGFQGGLRGVSQRLRPGEGDSGLRCPLLLQRR) form the Orange domain. A disordered region spans residues 126–166 (RAAGGSHSPQSPLPLPGGLLESSTDVVAPHPASNCQAESTR). Positions 129–148 (GGSHSPQSPLPLPGGLLESS) are enriched in low complexity. Residues 172–175 (WRPW) carry the WRPW motif motif.

As to quaternary structure, transcription repression requires formation of a complex with a corepressor protein of the Groucho/TLE family.

It is found in the nucleus. In terms of biological role, transcriptional repressor of genes that require a bHLH protein for their transcription. The chain is Transcription factor HES-3 (Hes3) from Mus musculus (Mouse).